The following is a 25-amino-acid chain: Ribosome-inactivating protein velutin (25 aa).

Residues 1–25 (XHPDLFXXRPDNTASPKFEDPRLNP) form a disordered region.

This sequence belongs to the ribosome-inactivating protein family.

It catalyses the reaction Endohydrolysis of the N-glycosidic bond at one specific adenosine on the 28S rRNA.. Inhibits protein synthesis but does not possess ribonuclease activity. Also inhibits HIV-1 reverse transcriptase, beta-glucosidase and beta-glucuronidase. This Flammulina velutipes (Agaricus velutipes) protein is Ribosome-inactivating protein velutin.